We begin with the raw amino-acid sequence, 412 residues long: G-protein coupled receptor homolog UL33 (412 aa).

Over 1–35 (MDTIIHNTTNRSTDTPHVNITCNITEPLSAIRTTE) the chain is Virion surface. 3 N-linked (GlcNAc...) asparagine; by host glycosylation sites follow: Asn-7, Asn-19, and Asn-23. A helical transmembrane segment spans residues 36–56 (AVINTFIIFVGGPLNAIVLIT). Topologically, residues 57–80 (QLLTNRVLGYSTPTIYMTNLYSTN) are intravirion. A helical membrane pass occupies residues 81–101 (FLTLTVLPFIVLSNQWLLPAS). Over 102–106 (VASCK) the chain is Virion surface. Cys-105 and Cys-188 are disulfide-bonded. The chain crosses the membrane as a helical span at residues 107-127 (FLSVIYYSSCTVGFATVALIA). Topologically, residues 128 to 147 (ADRYRVLHKRTYARQSYRST) are intravirion. Residues 148-168 (YIILLLTWFAGLIFSMPAAVY) traverse the membrane as a helical segment. Topologically, residues 169-206 (TTVVIHNGTNGQSSNGHATCVLYFIADEVYTVLLSWKV) are virion surface. Residues 207 to 227 (LLTLVWGAAPVIMMTWFYAFF) form a helical membrane-spanning segment. The Intravirion portion of the chain corresponds to 228-244 (YSTVQRASQKQRSRTLT). Residues 245–265 (FVSVLLISFVALQTPYVSIMI) form a helical membrane-spanning segment. Over 266–292 (FNSYATAAWPMDCEHLTLRRTIGTLSR) the chain is Virion surface. A helical membrane pass occupies residues 293-313 (LVPHLHCLINPILYALLGHDF). Residues 314-412 (LQRMRQCFRG…SQSHHNLSGV (99 aa)) lie on the Intravirion side of the membrane. The disordered stretch occupies residues 377 to 412 (NFPSGTWKGGQKTASNDTSTKIPHRLSQSHHNLSGV). Positions 388–397 (KTASNDTSTK) are enriched in polar residues.

Belongs to the G-protein coupled receptor 1 family. Heterodimerizes with US28.

The protein resides in the virion. Its subcellular location is the host cell membrane. It is found in the host cytoplasm. In terms of biological role, G-protein-coupled receptor (vGPCR) that constitutively activates multiple oncogenic signaling pathways including STAT3, AP-1, phospholipase C, NF-kappa-B or cAMP-responsive element (CRE) pathways. Plays an important role in viral reactivation from latency through activation of host CREB1, facilitating its recruitment to the viral major immediate early (MIE) genes. In turn, expression of the MIE-driven genes such as UL123 are de-repressed. Also facilitates virus dissemination via the extracellular and cell-to-cell route. In Human cytomegalovirus (strain Merlin) (HHV-5), this protein is G-protein coupled receptor homolog UL33 (UL33).